A 396-amino-acid polypeptide reads, in one-letter code: MAIIQSSAYEPLTEQKATALAVRLGLFRDGTPLLCREIGDGNLNLVFHVVDQETKQGIIIKQALPYAKVVGESWPLTLKRAVIESNALRTFASYVPQYVPKVYYSDESLAITVMEDLSYLQIARKGLIEGKTYPLLSRHIGEFIAKTAFYTSDFGMNQQEKKKLAQSFVNPELCKITEDLVFTDPFFDHDSNNFEDELHLDVETLWNDDRLHLEAAKLKRKFLTEADVLLHGDLHTGSIFASDDETKVIDPEFAFYGPIGFDLGHFIANLLLNALSRPESERRPLFDHIDRTWAVFTSVFSELWRTESVETYAATPGLLDDVLRQTFIDAVGFAGCEVIRRTIGLAHVADLDGIEQKDERLAAKRHALRLGRRLIVERAELDGTEDFRRLFVETER.

Residues N44, K61, and 115–117 (EDL) each bind ATP. A substrate-binding site is contributed by D233. 250 to 252 (DPE) is a binding site for ATP. Position 340 (R340) interacts with substrate.

Belongs to the methylthioribose kinase family. In terms of assembly, homodimer.

It carries out the reaction 5-(methylsulfanyl)-D-ribose + ATP = 5-(methylsulfanyl)-alpha-D-ribose 1-phosphate + ADP + H(+). It functions in the pathway amino-acid biosynthesis; L-methionine biosynthesis via salvage pathway; S-methyl-5-thio-alpha-D-ribose 1-phosphate from S-methyl-5'-thioadenosine (hydrolase route): step 2/2. Its function is as follows. Catalyzes the phosphorylation of methylthioribose into methylthioribose-1-phosphate. This chain is Methylthioribose kinase, found in Geobacillus thermodenitrificans (strain NG80-2).